Reading from the N-terminus, the 374-residue chain is 3-isopropylmalate dehydrogenase (374 aa).

83–96 (GPKWDNLPPEIRPE) provides a ligand contact to NAD(+). Substrate contacts are provided by Arg104, Arg114, Arg142, and Asp231. Mg(2+) contacts are provided by Asp231, Asp255, and Asp259. 288–300 (GSAPDIAGQNKAN) is an NAD(+) binding site.

This sequence belongs to the isocitrate and isopropylmalate dehydrogenases family. LeuB type 1 subfamily. In terms of assembly, homodimer. It depends on Mg(2+) as a cofactor. Requires Mn(2+) as cofactor.

It localises to the cytoplasm. It catalyses the reaction (2R,3S)-3-isopropylmalate + NAD(+) = 4-methyl-2-oxopentanoate + CO2 + NADH. It participates in amino-acid biosynthesis; L-leucine biosynthesis; L-leucine from 3-methyl-2-oxobutanoate: step 3/4. Catalyzes the oxidation of 3-carboxy-2-hydroxy-4-methylpentanoate (3-isopropylmalate) to 3-carboxy-4-methyl-2-oxopentanoate. The product decarboxylates to 4-methyl-2 oxopentanoate. This is 3-isopropylmalate dehydrogenase from Carboxydothermus hydrogenoformans (strain ATCC BAA-161 / DSM 6008 / Z-2901).